Consider the following 330-residue polypeptide: uncharacterized protein (330 aa).

The region spanning 4-242 is the ABC transporter domain; sequence LTISDLVVEY…AGEVLFEQST (239 aa). 40-47 lines the ATP pocket; the sequence is GPSGCGKT. An a nucleoside 3',5'-cyclic phosphate-binding site is contributed by 210-330; sequence DRVLELMPAQ…LIEHRELASE (121 aa).

Belongs to the ABC transporter superfamily.

This is an uncharacterized protein from Mycobacterium bovis (strain ATCC BAA-935 / AF2122/97).